A 368-amino-acid chain; its full sequence is Putative alcohol dehydrogenase D (368 aa).

The Zn(2+) site is built by Cys-40, His-61, Cys-91, Cys-94, Cys-97, Cys-105, and Cys-167.

The protein belongs to the zinc-containing alcohol dehydrogenase family. It depends on Zn(2+) as a cofactor.

The enzyme catalyses a primary alcohol + NAD(+) = an aldehyde + NADH + H(+). It catalyses the reaction a secondary alcohol + NAD(+) = a ketone + NADH + H(+). Required for maintaining the appropriate mycolic acid composition and permeability of the envelope on its exposure to acidic pH. The chain is Putative alcohol dehydrogenase D (adhD) from Mycobacterium tuberculosis (strain CDC 1551 / Oshkosh).